Consider the following 562-residue polypeptide: Dihydroxy-acid dehydratase (562 aa).

Mg(2+) is bound at residue Asp-80. A [2Fe-2S] cluster-binding site is contributed by Cys-121. 2 residues coordinate Mg(2+): Asp-122 and Lys-123. Lys-123 is modified (N6-carboxylysine). Cys-194 lines the [2Fe-2S] cluster pocket. Residue Glu-446 coordinates Mg(2+). Ser-472 functions as the Proton acceptor in the catalytic mechanism.

Belongs to the IlvD/Edd family. Homodimer. The cofactor is [2Fe-2S] cluster. Mg(2+) is required as a cofactor.

It catalyses the reaction (2R)-2,3-dihydroxy-3-methylbutanoate = 3-methyl-2-oxobutanoate + H2O. It carries out the reaction (2R,3R)-2,3-dihydroxy-3-methylpentanoate = (S)-3-methyl-2-oxopentanoate + H2O. It functions in the pathway amino-acid biosynthesis; L-isoleucine biosynthesis; L-isoleucine from 2-oxobutanoate: step 3/4. It participates in amino-acid biosynthesis; L-valine biosynthesis; L-valine from pyruvate: step 3/4. Functionally, functions in the biosynthesis of branched-chain amino acids. Catalyzes the dehydration of (2R,3R)-2,3-dihydroxy-3-methylpentanoate (2,3-dihydroxy-3-methylvalerate) into 2-oxo-3-methylpentanoate (2-oxo-3-methylvalerate) and of (2R)-2,3-dihydroxy-3-methylbutanoate (2,3-dihydroxyisovalerate) into 2-oxo-3-methylbutanoate (2-oxoisovalerate), the penultimate precursor to L-isoleucine and L-valine, respectively. In Staphylococcus aureus (strain bovine RF122 / ET3-1), this protein is Dihydroxy-acid dehydratase.